Consider the following 760-residue polypeptide: Molybdenum cofactor sulfurase 2 (760 aa).

Lys-223 bears the N6-(pyridoxal phosphate)lysine mark. The active site involves Cys-389. One can recognise an MOSC domain in the interval 608–758 (QSDDEARTLR…LHCGSPLQVV (151 aa)).

This sequence belongs to the class-V pyridoxal-phosphate-dependent aminotransferase family. MOCOS subfamily. Pyridoxal 5'-phosphate serves as cofactor.

The enzyme catalyses Mo-molybdopterin + L-cysteine + AH2 = thio-Mo-molybdopterin + L-alanine + A + H2O. Functionally, sulfurates the molybdenum cofactor. Sulfation of molybdenum is essential for xanthine dehydrogenase (XDH) and aldehyde oxidase (ADO) enzymes in which molybdenum cofactor is liganded by 1 oxygen and 1 sulfur atom in active form. The protein is Molybdenum cofactor sulfurase 2 of Culex quinquefasciatus (Southern house mosquito).